A 334-amino-acid polypeptide reads, in one-letter code: MSKNNKKKRRWDLKNGGILLEELIASFDGKTNPIRCFSSDQILKATDNFSESRIISSWGYFIWYKGVIEERQVSIKKWSSQNLSSFTEAYRDISVSSQMSGHKNALKLIGCCLEFDLPALVCEYTEHGPLNRDGGLSSGVVLPWKVRLKIAKEIASSVTYLHTAFPETIVHRNINPTNIFIDENWTAKLSDFWFCVAIPEGELYVEDDVKGVIGFVDPDYYWTMKVTEKVDIYSFGVVMLVLLSGRAAVFNGPDEAPMSLNDHVSEVMEKGEFDEIVDKEIWNDLGGDDDLVLRRSQVKAFLRLALRCVRYKKEDPVSGMLEVAKELKLIEKLS.

The region spanning 49–334 is the Protein kinase domain; it reads FSESRIISSW…KELKLIEKLS (286 aa). ATP is bound by residues 55–63 and lysine 76; that span reads ISSWGYFIW. Threonine 125 and threonine 177 each carry O-acetylthreonine.

It belongs to the protein kinase superfamily. Ser/Thr protein kinase family. ZRK subfamily. As to quaternary structure, interacts with RPP13L4/ZAR1. Component of an immune signaling complex made of, at least, SZE1, BKN2/SZE2, ZAR1 and ZED1. Binds directly to SZE1 at the plasma membrane. Expressed in seedlings, young leaves, floral organs, shoot apical meristems (SAM) and inflorescence stems.

The protein resides in the cytoplasm. It localises to the cytosol. It is found in the nucleus. The protein localises to the cell membrane. Together with RPP13L4/ZAR1, involved in the ambient temperature (above 22 degrees Celsius)-sensitive aerial organ development. Together with RPP13L4/ZAR1, involved in the regulation of the ambient temperature-sensitive intersection of growth and immune response in the absence of pathogens, by repressing the transcription of SNC1. Probable non-functional kinase required for recognition of the Pseudomonas syringae type III effector HopZ1a by RPP13L4/ZAR1 and, together with SZE1 and SZE2, to trigger subsequent defense responses. May function as a decoy to trap HopZ1a in the ZAR1 complex for recognition by the plant immune system. The protein is Non-functional pseudokinase ZED1 of Arabidopsis thaliana (Mouse-ear cress).